The following is a 144-amino-acid chain: Peptide methionine sulfoxide reductase MsrB (144 aa).

Residues 5–128 form the MsrB domain; the sequence is QEELRQRIGH…NSAALDFIPY (124 aa). Cysteine 117 acts as the Nucleophile in catalysis.

The protein belongs to the MsrB Met sulfoxide reductase family.

The catalysed reaction is L-methionyl-[protein] + [thioredoxin]-disulfide + H2O = L-methionyl-(R)-S-oxide-[protein] + [thioredoxin]-dithiol. The chain is Peptide methionine sulfoxide reductase MsrB from Streptococcus agalactiae serotype Ia (strain ATCC 27591 / A909 / CDC SS700).